Here is a 321-residue protein sequence, read N- to C-terminus: Transaldolase (321 aa).

The active-site Schiff-base intermediate with substrate is the Lys132.

This sequence belongs to the transaldolase family. Type 1 subfamily. Homodimer.

The protein localises to the cytoplasm. It carries out the reaction D-sedoheptulose 7-phosphate + D-glyceraldehyde 3-phosphate = D-erythrose 4-phosphate + beta-D-fructose 6-phosphate. It functions in the pathway carbohydrate degradation; pentose phosphate pathway; D-glyceraldehyde 3-phosphate and beta-D-fructose 6-phosphate from D-ribose 5-phosphate and D-xylulose 5-phosphate (non-oxidative stage): step 2/3. In terms of biological role, transaldolase is important for the balance of metabolites in the pentose-phosphate pathway. This is Transaldolase from Rhizobium etli (strain CIAT 652).